Consider the following 54-residue polypeptide: UPF0391 membrane protein Pmen_0080 (54 aa).

A run of 2 helical transmembrane segments spans residues 4-24 (WALT…GGIA) and 28-48 (AGIA…SFIM).

This sequence belongs to the UPF0391 family.

The protein localises to the cell membrane. This is UPF0391 membrane protein Pmen_0080 from Ectopseudomonas mendocina (strain ymp) (Pseudomonas mendocina).